Here is a 61-residue protein sequence, read N- to C-terminus: Large ribosomal subunit protein uL29 (61 aa).

This sequence belongs to the universal ribosomal protein uL29 family.

This chain is Large ribosomal subunit protein uL29, found in Nitratidesulfovibrio vulgaris (strain DSM 19637 / Miyazaki F) (Desulfovibrio vulgaris).